The following is a 592-amino-acid chain: Aspartate--tRNA ligase (592 aa).

E171 provides a ligand contact to L-aspartate. The segment at 195-198 is aspartate; that stretch reads QLFK. R217 is a binding site for L-aspartate. Residues 217–219 and Q226 contribute to the ATP site; that span reads RDE. Residue H448 participates in L-aspartate binding. Position 482 (E482) interacts with ATP. Position 489 (R489) interacts with L-aspartate. 534 to 537 provides a ligand contact to ATP; that stretch reads GLDR.

This sequence belongs to the class-II aminoacyl-tRNA synthetase family. Type 1 subfamily. In terms of assembly, homodimer.

It localises to the cytoplasm. It carries out the reaction tRNA(Asp) + L-aspartate + ATP = L-aspartyl-tRNA(Asp) + AMP + diphosphate. Its function is as follows. Catalyzes the attachment of L-aspartate to tRNA(Asp) in a two-step reaction: L-aspartate is first activated by ATP to form Asp-AMP and then transferred to the acceptor end of tRNA(Asp). In Pseudoalteromonas translucida (strain TAC 125), this protein is Aspartate--tRNA ligase.